The following is an 88-amino-acid chain: Small ribosomal subunit protein uS17 (88 aa).

This sequence belongs to the universal ribosomal protein uS17 family. As to quaternary structure, part of the 30S ribosomal subunit.

Its function is as follows. One of the primary rRNA binding proteins, it binds specifically to the 5'-end of 16S ribosomal RNA. This chain is Small ribosomal subunit protein uS17, found in Nitrosospira multiformis (strain ATCC 25196 / NCIMB 11849 / C 71).